The primary structure comprises 638 residues: Threonine--tRNA ligase (638 aa).

Residues 1–61 enclose the TGS domain; sequence MPIITLPDGT…DYDAEIKIIT (61 aa). The segment at 242-533 is catalytic; that stretch reads DHRKIGKKMD…LIENYAGNFP (292 aa). Zn(2+)-binding residues include Cys-333, His-384, and His-510.

Belongs to the class-II aminoacyl-tRNA synthetase family. In terms of assembly, homodimer. The cofactor is Zn(2+).

The protein localises to the cytoplasm. It catalyses the reaction tRNA(Thr) + L-threonine + ATP = L-threonyl-tRNA(Thr) + AMP + diphosphate + H(+). In terms of biological role, catalyzes the attachment of threonine to tRNA(Thr) in a two-step reaction: L-threonine is first activated by ATP to form Thr-AMP and then transferred to the acceptor end of tRNA(Thr). Also edits incorrectly charged L-seryl-tRNA(Thr). The chain is Threonine--tRNA ligase from Prochlorococcus marinus (strain MIT 9211).